The following is a 304-amino-acid chain: ATP phosphoribosyltransferase (304 aa).

The protein belongs to the ATP phosphoribosyltransferase family. Long subfamily. Mg(2+) is required as a cofactor.

The protein resides in the cytoplasm. The enzyme catalyses 1-(5-phospho-beta-D-ribosyl)-ATP + diphosphate = 5-phospho-alpha-D-ribose 1-diphosphate + ATP. The protein operates within amino-acid biosynthesis; L-histidine biosynthesis; L-histidine from 5-phospho-alpha-D-ribose 1-diphosphate: step 1/9. Feedback inhibited by histidine. In terms of biological role, catalyzes the condensation of ATP and 5-phosphoribose 1-diphosphate to form N'-(5'-phosphoribosyl)-ATP (PR-ATP). Has a crucial role in the pathway because the rate of histidine biosynthesis seems to be controlled primarily by regulation of HisG enzymatic activity. The polypeptide is ATP phosphoribosyltransferase (Xanthomonas campestris pv. campestris (strain B100)).